Consider the following 1271-residue polypeptide: MVRKKNPPLRNIASEGEAQITESAASKREDTISSKEISTDPMQENSEQSGLVEHNSDDHSFHDQEPSSSINKDSASLSLSERAVVNYSHLKGRNVYFSPMEVTDRNMLALVTTDTRSACDPLKSPIKSEADDTQELASSASVDSLEAKEENDMSPRATDFTVQCGKVDCQSSSPASVASDNLHVPSDGIAGLNKSQAVLLVNDNSDSAPLSPELQDFKCNICGYGYYGNDPTDLIKHFRKYHLGLHNRTRQDVELDTKILALHNMVQFSQSKDFQKMNRSVLSGVLQDFNSPRPVLLNGTYDVQVTFGETFIGIGRKTPDCQGNTKYFRCKFCNFTYLAKSATELEQHFLKTHPNKMKMSSDSGKPSEKSTNKSSPIPRSCEPGDLGKWQDKITVKAADDIPVGYSVPIKPVDSCRQNGTDDTNYYWCKFCSFSCESSSNSKLLEHHSKQHGGGKSESPNSDLNDEIFRGSVINQNEITKSSDEQLPTKIDKGLAKKKDVSSVPTEDIIVTNYNCQFCDFRYSKSHGPEVILVGPLLRHYQQHHNIHKCTIKHCPFCPRGLCTPEKHLGEITYPFACKKSNCSHCALLLLHLSSGGTESTRVKHQCDQCSFSSPDVDVLLLHYENAHEAQACEIKQELNHQHGADGQPSIKEIKEHSCTKCDFIVQVEEDLPRHYRRVHNCYKCRQCNFTAADTQSLLDHFNSAHCQEFEITTSNGGEHHGTSSIKEEPKTDLKVYNLVTPDSKMGEAIFDSTVKKEKLEDKETLREKAWSDGSVDDLRGVAWRAPDILRTSPSYSQMGLGLLTTVSVNQDQQKSSRDSPNVEAAHLARPVYGLSIEPKGFQGVTAGASGEKSGQHTPQYPTAGDSKSKDESQSLLRRRRGSGVFCANCLTTKTSLWRKNANGGYVCNACGLYQKLHSTPRPLNIIKQNNGEQIIRRRTRKRLNPEALQPEQLTKHQRASSEEQANGSPLDIRSEDHSMEGHQRENQQLSMNKYGSQASLTKSHSAQQTMIVSQTMDIHKRMQPLHIQIKSPQESSGEPGNSSSVSDGKGSSERGSPIEKYMRPIKHPNYSPPGSPIEKYQYPLFGLPFVHNDFQSEADWLRFWSKYKLSVPGNPHYLSHVPGLPNPCPNYVPYPTFNLPAQYSSVGSDNDIPLDLAMKHSRPGSGTNGDSKEKSKSPVSVKDDGPLNVTKIEKSDKSTQDELSTKCVHCGIVFLDEVMYALHMSCHGESGPFQCSICQHLCTDKYDFTTHIQRGLHRNIAQAEKNGKNKD.

Disordered stretches follow at residues 1–76 and 124–155; these read MVRK…DSAS and SPIK…DMSP. The span at 34–49 shows a compositional bias: polar residues; the sequence is SKEISTDPMQENSEQS. Over residues 54–65 the composition is skewed to basic and acidic residues; the sequence is HNSDDHSFHDQE. A compositionally biased stretch (polar residues) spans 66–76; that stretch reads PSSSINKDSAS. The C2H2-type 1; atypical zinc-finger motif lies at 217–242; the sequence is FKCNICGYGYYGNDPTDLIKHFRKYH. The segment at 328–353 adopts a C2H2-type 2; atypical zinc-finger fold; sequence FRCKFCNFTYLAKSATELEQHFLKTH. The segment at 353–387 is disordered; it reads HPNKMKMSSDSGKPSEKSTNKSSPIPRSCEPGDLG. Residues 426-451 form a C2H2-type 3; atypical zinc finger; the sequence is YWCKFCSFSCESSSNSKLLEHHSKQH. A C2H2-type 4; atypical zinc finger spans residues 513 to 543; sequence YNCQFCDFRYSKSHGPEVILVGPLLRHYQQH. 3 C2H2-type zinc fingers span residues 604–627, 656–679, and 682–705; these read HQCD…ENAH, HSCT…RRVH, and YKCR…NSAH. The interval 843–877 is disordered; the sequence is GVTAGASGEKSGQHTPQYPTAGDSKSKDESQSLLR. The GATA-type zinc-finger motif lies at 886-910; it reads CANCLTTKTSLWRKNANGGYVCNAC. 3 disordered regions span residues 938-987, 1031-1064, and 1154-1196; these read RTRK…RENQ, SPQE…YMRP, and LDLA…EKSD. Residues 972-985 are compositionally biased toward basic and acidic residues; that stretch reads IRSEDHSMEGHQRE. Residues 1031-1049 are compositionally biased toward low complexity; that stretch reads SPQESSGEPGNSSSVSDGK. Composition is skewed to basic and acidic residues over residues 1050–1062 and 1170–1196; these read GSSE…EKYM and DSKE…EKSD. Positions 1153–1271 are transcriptional repressor domain; sequence PLDLAMKHSR…QAEKNGKNKD (119 aa). Glycyl lysine isopeptide (Lys-Gly) (interchain with G-Cter in SUMO) cross-links involve residues lysine 1182 and lysine 1191. 2 consecutive C2H2-type zinc fingers follow at residues 1205–1227 and 1233–1257; these read TKCV…MSCH and FQCS…RGLH.

In terms of assembly, binds specifically to GATA sequences. In terms of processing, sumoylated. Sumoylation in the repressor domain inhibits the transcription repression activity. Sumoylation on Lys-1191 is the major site. Appears to be sumoylated on multiple sites.

The protein resides in the nucleus. Transcriptional repressor. Represses expression of GATA-regulated genes at selected sites and stages in vertebrate development. The chain is Zinc finger transcription factor Trps1 (trps1) from Xenopus laevis (African clawed frog).